The chain runs to 577 residues: Proline--tRNA ligase (577 aa).

The protein belongs to the class-II aminoacyl-tRNA synthetase family. ProS type 1 subfamily. Homodimer.

It localises to the cytoplasm. The enzyme catalyses tRNA(Pro) + L-proline + ATP = L-prolyl-tRNA(Pro) + AMP + diphosphate. Functionally, catalyzes the attachment of proline to tRNA(Pro) in a two-step reaction: proline is first activated by ATP to form Pro-AMP and then transferred to the acceptor end of tRNA(Pro). As ProRS can inadvertently accommodate and process non-cognate amino acids such as alanine and cysteine, to avoid such errors it has two additional distinct editing activities against alanine. One activity is designated as 'pretransfer' editing and involves the tRNA(Pro)-independent hydrolysis of activated Ala-AMP. The other activity is designated 'posttransfer' editing and involves deacylation of mischarged Ala-tRNA(Pro). The misacylated Cys-tRNA(Pro) is not edited by ProRS. The chain is Proline--tRNA ligase from Helicobacter pylori (strain HPAG1).